The chain runs to 100 residues: Aspartyl/glutamyl-tRNA(Asn/Gln) amidotransferase subunit C (100 aa).

This sequence belongs to the GatC family. In terms of assembly, heterotrimer of A, B and C subunits.

The catalysed reaction is L-glutamyl-tRNA(Gln) + L-glutamine + ATP + H2O = L-glutaminyl-tRNA(Gln) + L-glutamate + ADP + phosphate + H(+). It catalyses the reaction L-aspartyl-tRNA(Asn) + L-glutamine + ATP + H2O = L-asparaginyl-tRNA(Asn) + L-glutamate + ADP + phosphate + 2 H(+). In terms of biological role, allows the formation of correctly charged Asn-tRNA(Asn) or Gln-tRNA(Gln) through the transamidation of misacylated Asp-tRNA(Asn) or Glu-tRNA(Gln) in organisms which lack either or both of asparaginyl-tRNA or glutaminyl-tRNA synthetases. The reaction takes place in the presence of glutamine and ATP through an activated phospho-Asp-tRNA(Asn) or phospho-Glu-tRNA(Gln). This chain is Aspartyl/glutamyl-tRNA(Asn/Gln) amidotransferase subunit C, found in Rickettsia bellii (strain RML369-C).